The following is a 314-amino-acid chain: Probable serine/threonine-protein kinase WNK11 (314 aa).

The tract at residues 1–22 (MMTCASSDDNESEKDKDSESFV) is disordered. The region spanning 31 to 289 (GRYGELLGSG…AAELLCDPFF (259 aa)) is the Protein kinase domain. ATP is bound at residue 111–114 (TEIC). The active-site Proton acceptor is the D178. The disordered stretch occupies residues 295-314 (DDDEDGENNDNNGAGRIVVS).

Belongs to the protein kinase superfamily. Ser/Thr protein kinase family. WNK subfamily.

It catalyses the reaction L-seryl-[protein] + ATP = O-phospho-L-seryl-[protein] + ADP + H(+). It carries out the reaction L-threonyl-[protein] + ATP = O-phospho-L-threonyl-[protein] + ADP + H(+). May regulate flowering time by modulating the photoperiod pathway. This is Probable serine/threonine-protein kinase WNK11 (WNK11) from Arabidopsis thaliana (Mouse-ear cress).